The primary structure comprises 550 residues: 2-succinyl-5-enolpyruvyl-6-hydroxy-3-cyclohexene-1-carboxylate synthase (550 aa).

Belongs to the TPP enzyme family. MenD subfamily. As to quaternary structure, homodimer. The cofactor is Mg(2+). Mn(2+) serves as cofactor. It depends on thiamine diphosphate as a cofactor.

It carries out the reaction isochorismate + 2-oxoglutarate + H(+) = 5-enolpyruvoyl-6-hydroxy-2-succinyl-cyclohex-3-ene-1-carboxylate + CO2. It participates in quinol/quinone metabolism; 1,4-dihydroxy-2-naphthoate biosynthesis; 1,4-dihydroxy-2-naphthoate from chorismate: step 2/7. The protein operates within quinol/quinone metabolism; menaquinone biosynthesis. In terms of biological role, catalyzes the thiamine diphosphate-dependent decarboxylation of 2-oxoglutarate and the subsequent addition of the resulting succinic semialdehyde-thiamine pyrophosphate anion to isochorismate to yield 2-succinyl-5-enolpyruvyl-6-hydroxy-3-cyclohexene-1-carboxylate (SEPHCHC). The sequence is that of 2-succinyl-5-enolpyruvyl-6-hydroxy-3-cyclohexene-1-carboxylate synthase from Desulfitobacterium hafniense (strain DSM 10664 / DCB-2).